The sequence spans 525 residues: GMP synthase [glutamine-hydrolyzing] (525 aa).

The 199-residue stretch at 8–206 folds into the Glutamine amidotransferase type-1 domain; sequence PLLILDFGSQ…VVDICKAPTE (199 aa). The Nucleophile role is filled by Cys-85. Catalysis depends on residues His-180 and Glu-182. One can recognise a GMPS ATP-PPase domain in the interval 207–400; it reads WTPEHIIDEA…LGLPHDMVYR (194 aa). 234–240 is a binding site for ATP; it reads SGGVDSS.

As to quaternary structure, homodimer.

The catalysed reaction is XMP + L-glutamine + ATP + H2O = GMP + L-glutamate + AMP + diphosphate + 2 H(+). It participates in purine metabolism; GMP biosynthesis; GMP from XMP (L-Gln route): step 1/1. Catalyzes the synthesis of GMP from XMP. The protein is GMP synthase [glutamine-hydrolyzing] of Legionella pneumophila (strain Corby).